The primary structure comprises 236 residues: 2-C-methyl-D-erythritol 4-phosphate cytidylyltransferase (236 aa).

It belongs to the IspD/TarI cytidylyltransferase family. IspD subfamily. In terms of assembly, homodimer.

The enzyme catalyses 2-C-methyl-D-erythritol 4-phosphate + CTP + H(+) = 4-CDP-2-C-methyl-D-erythritol + diphosphate. Its pathway is isoprenoid biosynthesis; isopentenyl diphosphate biosynthesis via DXP pathway; isopentenyl diphosphate from 1-deoxy-D-xylulose 5-phosphate: step 2/6. In terms of biological role, catalyzes the formation of 4-diphosphocytidyl-2-C-methyl-D-erythritol from CTP and 2-C-methyl-D-erythritol 4-phosphate (MEP). The chain is 2-C-methyl-D-erythritol 4-phosphate cytidylyltransferase from Escherichia coli O127:H6 (strain E2348/69 / EPEC).